The sequence spans 130 residues: Small ribosomal subunit protein uS9 (130 aa).

It belongs to the universal ribosomal protein uS9 family.

This is Small ribosomal subunit protein uS9 from Pasteurella multocida (strain Pm70).